The primary structure comprises 881 residues: Putative leucine-rich repeat receptor-like protein kinase At2g19210 (881 aa).

The N-terminal stretch at 1 to 25 (MVHYNFLSLIIFACFFAVFVLLVRA) is a signal peptide. Over 26 to 518 (QDQSGFVSID…SDEKTKKNVY (493 aa)) the chain is Extracellular. 9 N-linked (GlcNAc...) asparagine glycosylation sites follow: N143, N234, N295, N310, N404, N419, N435, N446, and N462. LRR repeat units follow at residues 438-460 (LLHILDLSNNSLTGKIPDFLGNL) and 462-483 (NLTELNLEGNKLSGAIPVKLLE). The chain crosses the membrane as a helical span at residues 519–539 (IIPLVASVVGVLGLVLAIALF). At 540–881 (LLYKKRHRRG…FDSGMFPQAR (342 aa)) the chain is on the cytoplasmic side. Positions 576-850 (NNFERVLGQG…HVVAELKESV (275 aa)) constitute a Protein kinase domain. ATP is bound by residues 582 to 590 (LGQGGFGKV) and K603. Y648 carries the phosphotyrosine modification. Catalysis depends on D699, which acts as the Proton acceptor. 2 positions are modified to phosphothreonine: T734 and T739. Phosphotyrosine is present on Y747. Positions 851 to 881 (SRARAGGGSGASSVTDPAMTNFDSGMFPQAR) are disordered.

This sequence belongs to the protein kinase superfamily. Ser/Thr protein kinase family.

Its subcellular location is the cell membrane. The catalysed reaction is L-seryl-[protein] + ATP = O-phospho-L-seryl-[protein] + ADP + H(+). It carries out the reaction L-threonyl-[protein] + ATP = O-phospho-L-threonyl-[protein] + ADP + H(+). The polypeptide is Putative leucine-rich repeat receptor-like protein kinase At2g19210 (Arabidopsis thaliana (Mouse-ear cress)).